The following is a 504-amino-acid chain: Anaerobic nitric oxide reductase transcription regulator NorR (504 aa).

Asp57 is modified (4-aspartylphosphate). The Sigma-54 factor interaction domain occupies 187–416 (MIGLSPGMTQ…LEHAIHRAVV (230 aa)). ATP-binding positions include 215 to 222 (GETGTGKE) and 278 to 287 (ADNGTLFLDE). The H-T-H motif DNA-binding region spans 479–498 (WAACARMLETDVANLHRLAK).

It participates in nitrogen metabolism; nitric oxide reduction. Its function is as follows. Required for the expression of anaerobic nitric oxide (NO) reductase, acts as a transcriptional activator for at least the norVW operon. Activation also requires sigma-54. In Shigella flexneri serotype 5b (strain 8401), this protein is Anaerobic nitric oxide reductase transcription regulator NorR.